Consider the following 327-residue polypeptide: D-alanine--D-alanine ligase (327 aa).

An ATP-grasp domain is found at 113–312 (KRLWMTHGLA…YEDFVMQVLA (200 aa)). 139-194 (VADLGLPLIVKPAREGSSIGLTKVIAADQMRAAFEKAAGLDADVIAETFIDGAELT) is an ATP binding site. 3 residues coordinate Mg(2+): aspartate 266, glutamate 279, and asparagine 281.

This sequence belongs to the D-alanine--D-alanine ligase family. Requires Mg(2+) as cofactor. It depends on Mn(2+) as a cofactor.

The protein localises to the cytoplasm. It carries out the reaction 2 D-alanine + ATP = D-alanyl-D-alanine + ADP + phosphate + H(+). It participates in cell wall biogenesis; peptidoglycan biosynthesis. Its function is as follows. Cell wall formation. The sequence is that of D-alanine--D-alanine ligase from Cupriavidus metallidurans (strain ATCC 43123 / DSM 2839 / NBRC 102507 / CH34) (Ralstonia metallidurans).